The sequence spans 129 residues: Small ribosomal subunit protein uS11 (129 aa).

The protein belongs to the universal ribosomal protein uS11 family. In terms of assembly, part of the 30S ribosomal subunit. Interacts with proteins S7 and S18. Binds to IF-3.

Located on the platform of the 30S subunit, it bridges several disparate RNA helices of the 16S rRNA. Forms part of the Shine-Dalgarno cleft in the 70S ribosome. The sequence is that of Small ribosomal subunit protein uS11 from Jannaschia sp. (strain CCS1).